Here is a 485-residue protein sequence, read N- to C-terminus: NADH-quinone oxidoreductase subunit N (485 aa).

14 helical membrane passes run Leu-8–Ile-28, Phe-35–Val-55, Gly-71–Ala-91, Phe-105–Leu-125, Ser-127–Phe-147, Tyr-159–Ala-179, Leu-203–Phe-223, Pro-235–Met-255, Val-271–Gln-291, Leu-297–Gln-317, Val-326–Leu-346, Ala-373–Ile-393, Trp-408–Val-430, and Ile-455–Ile-475.

This sequence belongs to the complex I subunit 2 family. As to quaternary structure, NDH-1 is composed of 13 different subunits. Subunits NuoA, H, J, K, L, M, N constitute the membrane sector of the complex.

The protein resides in the cell inner membrane. It carries out the reaction a quinone + NADH + 5 H(+)(in) = a quinol + NAD(+) + 4 H(+)(out). NDH-1 shuttles electrons from NADH, via FMN and iron-sulfur (Fe-S) centers, to quinones in the respiratory chain. The immediate electron acceptor for the enzyme in this species is believed to be ubiquinone. Couples the redox reaction to proton translocation (for every two electrons transferred, four hydrogen ions are translocated across the cytoplasmic membrane), and thus conserves the redox energy in a proton gradient. This chain is NADH-quinone oxidoreductase subunit N, found in Escherichia coli O1:K1 / APEC.